Consider the following 833-residue polypeptide: Glycerol-3-phosphate acyltransferase (833 aa).

An HXXXXD motif motif is present at residues Cys-309–Ile-314.

This sequence belongs to the GPAT/DAPAT family.

The protein localises to the cell inner membrane. The catalysed reaction is sn-glycerol 3-phosphate + an acyl-CoA = a 1-acyl-sn-glycero-3-phosphate + CoA. The protein operates within phospholipid metabolism; CDP-diacylglycerol biosynthesis; CDP-diacylglycerol from sn-glycerol 3-phosphate: step 1/3. In Pseudomonas savastanoi pv. phaseolicola (strain 1448A / Race 6) (Pseudomonas syringae pv. phaseolicola (strain 1448A / Race 6)), this protein is Glycerol-3-phosphate acyltransferase.